The primary structure comprises 128 residues: Azurin (128 aa).

A Plastocyanin-like domain is found at 1-128; it reads AECKVTVDST…SMMKGTVTVK (128 aa). Residues Cys-3 and Cys-26 are joined by a disulfide bond. Residues His-46, Cys-112, His-117, and Met-121 each contribute to the Cu cation site.

It is found in the periplasm. Transfers electrons from cytochrome c551 to cytochrome oxidase. The protein is Azurin of Pseudomonas fluorescens biotype A.